Consider the following 590-residue polypeptide: NADH-ubiquinone oxidoreductase chain 5 (590 aa).

The next 18 helical transmembrane spans lie at methionine 1–phenylalanine 21, phenylalanine 28–methionine 48, tyrosine 58–cysteine 78, phenylalanine 81–phenylalanine 101, phenylalanine 113–phenylalanine 133, alanine 136–tyrosine 156, valine 176–phenylalanine 198, alanine 245–tryptophan 265, tyrosine 273–phenylalanine 293, isoleucine 310–cysteine 330, methionine 333–leucine 353, leucine 372–cysteine 392, methionine 395–serine 415, phenylalanine 428–phenylalanine 450, isoleucine 461–valine 481, isoleucine 501–phenylalanine 521, isoleucine 536–cysteine 556, and phenylalanine 568–leucine 588.

It belongs to the complex I subunit 5 family.

The protein resides in the mitochondrion inner membrane. The catalysed reaction is a ubiquinone + NADH + 5 H(+)(in) = a ubiquinol + NAD(+) + 4 H(+)(out). Its function is as follows. Core subunit of the mitochondrial membrane respiratory chain NADH dehydrogenase (Complex I) that is believed to belong to the minimal assembly required for catalysis. Complex I functions in the transfer of electrons from NADH to the respiratory chain. The immediate electron acceptor for the enzyme is believed to be ubiquinone. The protein is NADH-ubiquinone oxidoreductase chain 5 (ND5) of Trypanosoma brucei brucei.